Reading from the N-terminus, the 50-residue chain is MNFYSLFVFIALIFSFNVVHGHRCHRGGNGGYGGGSGEVVVIGAEKPKDK.

A signal peptide spans Met-1 to Gly-21.

In terms of biological role, may have role in hypoxia response. In Caenorhabditis elegans, this protein is Fungus-induced-related protein 15 (fipr-15).